The following is a 78-amino-acid chain: UPF0349 protein YuzB (78 aa).

Belongs to the UPF0349 family.

This is UPF0349 protein YuzB (yuzB) from Bacillus subtilis (strain 168).